Consider the following 160-residue polypeptide: Phosphopantetheine adenylyltransferase (160 aa).

Residue Ser-10 coordinates substrate. Residues 10 to 11 (SF) and His-18 each bind ATP. Lys-42, Thr-74, and Arg-88 together coordinate substrate. ATP is bound by residues 89-91 (GLR), Glu-99, and 124-130 (YSFISST).

Belongs to the bacterial CoaD family. In terms of assembly, homohexamer. Mg(2+) serves as cofactor.

Its subcellular location is the cytoplasm. It catalyses the reaction (R)-4'-phosphopantetheine + ATP + H(+) = 3'-dephospho-CoA + diphosphate. It participates in cofactor biosynthesis; coenzyme A biosynthesis; CoA from (R)-pantothenate: step 4/5. In terms of biological role, reversibly transfers an adenylyl group from ATP to 4'-phosphopantetheine, yielding dephospho-CoA (dPCoA) and pyrophosphate. The chain is Phosphopantetheine adenylyltransferase from Leptospira interrogans serogroup Icterohaemorrhagiae serovar copenhageni (strain Fiocruz L1-130).